Here is a 395-residue protein sequence, read N- to C-terminus: Argininosuccinate synthase (395 aa).

ATP is bound by residues 6-14 (AYSGGLDTS) and alanine 33. Tyrosine 84 is a binding site for L-citrulline. Residue glycine 114 participates in ATP binding. L-aspartate-binding residues include threonine 116, asparagine 120, and aspartate 121. Residue asparagine 120 coordinates L-citrulline. L-citrulline contacts are provided by arginine 124, serine 173, serine 182, glutamate 258, and tyrosine 270.

The protein belongs to the argininosuccinate synthase family. Type 1 subfamily. Homotetramer.

It is found in the cytoplasm. The enzyme catalyses L-citrulline + L-aspartate + ATP = 2-(N(omega)-L-arginino)succinate + AMP + diphosphate + H(+). It functions in the pathway amino-acid biosynthesis; L-arginine biosynthesis; L-arginine from L-ornithine and carbamoyl phosphate: step 2/3. In Rhodococcoides fascians (Rhodococcus fascians), this protein is Argininosuccinate synthase.